The primary structure comprises 284 residues: Ribosomal RNA small subunit methyltransferase A (284 aa).

6 residues coordinate S-adenosyl-L-methionine: Asn-33, Leu-35, Gly-60, Glu-81, Asp-101, and Asn-124.

It belongs to the class I-like SAM-binding methyltransferase superfamily. rRNA adenine N(6)-methyltransferase family. RsmA subfamily.

It localises to the cytoplasm. It catalyses the reaction adenosine(1518)/adenosine(1519) in 16S rRNA + 4 S-adenosyl-L-methionine = N(6)-dimethyladenosine(1518)/N(6)-dimethyladenosine(1519) in 16S rRNA + 4 S-adenosyl-L-homocysteine + 4 H(+). Functionally, specifically dimethylates two adjacent adenosines (A1518 and A1519) in the loop of a conserved hairpin near the 3'-end of 16S rRNA in the 30S particle. May play a critical role in biogenesis of 30S subunits. The chain is Ribosomal RNA small subunit methyltransferase A from Chlamydia felis (strain Fe/C-56) (Chlamydophila felis).